A 262-amino-acid chain; its full sequence is Phosphonates import ATP-binding protein PhnC (262 aa).

An ABC transporter domain is found at 5 to 253; sequence IRVEKLAKTF…RFDHLYRSIN (249 aa). Position 37–44 (37–44) interacts with ATP; that stretch reads GPSGSGKS.

It belongs to the ABC transporter superfamily. Phosphonates importer (TC 3.A.1.9.1) family. The complex is composed of two ATP-binding proteins (PhnC), two transmembrane proteins (PhnE) and a solute-binding protein (PhnD).

Its subcellular location is the cell inner membrane. It carries out the reaction phosphonate(out) + ATP + H2O = phosphonate(in) + ADP + phosphate + H(+). Part of the ABC transporter complex PhnCDE involved in phosphonates import. Responsible for energy coupling to the transport system. This is Phosphonates import ATP-binding protein PhnC from Shigella boydii serotype 4 (strain Sb227).